We begin with the raw amino-acid sequence, 300 residues long: N-acetylmannosamine kinase (300 aa).

ATP is bound by residues Ala-5–Lys-12 and Gly-132–Leu-139. Zn(2+)-binding residues include His-156, Cys-166, Cys-168, and Cys-173.

It belongs to the ROK (NagC/XylR) family. NanK subfamily. Homodimer.

The enzyme catalyses an N-acyl-D-mannosamine + ATP = an N-acyl-D-mannosamine 6-phosphate + ADP + H(+). It functions in the pathway amino-sugar metabolism; N-acetylneuraminate degradation; D-fructose 6-phosphate from N-acetylneuraminate: step 2/5. Functionally, catalyzes the phosphorylation of N-acetylmannosamine (ManNAc) to ManNAc-6-P. This chain is N-acetylmannosamine kinase, found in Haemophilus influenzae (strain PittEE).